The primary structure comprises 315 residues: Voltage-dependent calcium channel gamma-3 subunit (315 aa).

Helical transmembrane passes span 8–28, 104–124, 135–155, and 181–201; these read VQMLITTVGAFAAFSLMTIAV, SSVFPILSVTLLFFGGLCVAA, ILSAGIFFVSAGLSNIIGIIV, and FGAFSFIIAEIVGVVAVHIYI. The interval 232-252 is disordered; that stretch reads RRRSSSRSTEPRSRDLSPISK. At serine 248 the chain carries Phosphoserine.

Belongs to the PMP-22/EMP/MP20 family. CACNG subfamily. The L-type calcium channel is composed of five subunits: alpha-1, alpha-2/delta, beta and gamma. Acts as an auxiliary subunit for AMPA-selective glutamate receptors (AMPARs). Found in a complex with GRIA1, GRIA2, GRIA3, GRIA4, CNIH2, CNIH3, CACNG2, CACNG4, CACNG5, CACNG7 and CACNG8. Interacts with AP4M1 and GRIA1; associates GRIA1 with the adaptor protein complex 4 (AP-4) to target GRIA1 to the somatodendritic compartment of neurons.

The protein localises to the membrane. Its function is as follows. Regulates the trafficking and gating properties of AMPA-selective glutamate receptors (AMPARs). Promotes their targeting to the cell membrane and synapses and modulates their gating properties by slowing their rates of activation, deactivation and desensitization. Does not show subunit-specific AMPA receptor regulation and regulates all AMPAR subunits. Thought to stabilize the calcium channel in an inactivated (closed) state. This Bos taurus (Bovine) protein is Voltage-dependent calcium channel gamma-3 subunit (CACNG3).